The sequence spans 200 residues: Glycerol-3-phosphate acyltransferase (200 aa).

Helical transmembrane passes span 3-23, 50-70, 75-95, 109-129, and 134-154; these read YIYS…FFIA, FYGA…VFLV, IKFM…SIFL, VFLA…LFIV, and YVSL…FFAG.

Belongs to the PlsY family. In terms of assembly, probably interacts with PlsX.

Its subcellular location is the cell inner membrane. It catalyses the reaction an acyl phosphate + sn-glycerol 3-phosphate = a 1-acyl-sn-glycero-3-phosphate + phosphate. The protein operates within lipid metabolism; phospholipid metabolism. Functionally, catalyzes the transfer of an acyl group from acyl-phosphate (acyl-PO(4)) to glycerol-3-phosphate (G3P) to form lysophosphatidic acid (LPA). This enzyme utilizes acyl-phosphate as fatty acyl donor, but not acyl-CoA or acyl-ACP. The polypeptide is Glycerol-3-phosphate acyltransferase (Thermosipho melanesiensis (strain DSM 12029 / CIP 104789 / BI429)).